The chain runs to 878 residues: Phosphoenolpyruvate carboxylase (878 aa).

Catalysis depends on residues histidine 140 and lysine 545.

Belongs to the PEPCase type 1 family. Mg(2+) serves as cofactor.

It carries out the reaction oxaloacetate + phosphate = phosphoenolpyruvate + hydrogencarbonate. In terms of biological role, forms oxaloacetate, a four-carbon dicarboxylic acid source for the tricarboxylic acid cycle. The protein is Phosphoenolpyruvate carboxylase of Pseudomonas aeruginosa (strain ATCC 15692 / DSM 22644 / CIP 104116 / JCM 14847 / LMG 12228 / 1C / PRS 101 / PAO1).